Here is a 173-residue protein sequence, read N- to C-terminus: Shikimate kinase 2 (173 aa).

ATP is bound at residue 12 to 17 (GCGKTT). Thr16 and Asp32 together coordinate Mg(2+). Asp34, Arg58, and Gly79 together coordinate substrate. An LID domain region spans residues 112-126 (EENPQDNQRPTLTGR). Residue Arg120 participates in ATP binding. Arg139 is a substrate binding site. Residue Gln155 participates in ATP binding.

Belongs to the shikimate kinase family. AroL subfamily. As to quaternary structure, monomer. It depends on Mg(2+) as a cofactor.

It is found in the cytoplasm. It carries out the reaction shikimate + ATP = 3-phosphoshikimate + ADP + H(+). Its pathway is metabolic intermediate biosynthesis; chorismate biosynthesis; chorismate from D-erythrose 4-phosphate and phosphoenolpyruvate: step 5/7. Functionally, catalyzes the specific phosphorylation of the 3-hydroxyl group of shikimic acid using ATP as a cosubstrate. The polypeptide is Shikimate kinase 2 (Pectobacterium atrosepticum (strain SCRI 1043 / ATCC BAA-672) (Erwinia carotovora subsp. atroseptica)).